The following is a 59-amino-acid chain: UPF0391 membrane protein GbCGDNIH1_2123 (59 aa).

2 consecutive transmembrane segments (helical) span residues L6–S26 and I35–G55.

This sequence belongs to the UPF0391 family.

Its subcellular location is the cell membrane. In Granulibacter bethesdensis (strain ATCC BAA-1260 / CGDNIH1), this protein is UPF0391 membrane protein GbCGDNIH1_2123.